Here is a 293-residue protein sequence, read N- to C-terminus: Energy-coupling factor transporter ATP-binding protein EcfA2 (293 aa).

Residues 3–246 form the ABC transporter domain; it reads ITFQKVEHRY…ADELEKIGVD (244 aa). Residue 40–47 participates in ATP binding; the sequence is GHTGSGKS.

This sequence belongs to the ABC transporter superfamily. Energy-coupling factor EcfA family. As to quaternary structure, forms a stable energy-coupling factor (ECF) transporter complex composed of 2 membrane-embedded substrate-binding proteins (S component), 2 ATP-binding proteins (A component) and 2 transmembrane proteins (T component).

It localises to the cell membrane. Its function is as follows. ATP-binding (A) component of a common energy-coupling factor (ECF) ABC-transporter complex. Unlike classic ABC transporters this ECF transporter provides the energy necessary to transport a number of different substrates. The chain is Energy-coupling factor transporter ATP-binding protein EcfA2 from Bacillus cereus (strain ZK / E33L).